We begin with the raw amino-acid sequence, 413 residues long: Hemolin (413 aa).

An N-terminal signal peptide occupies residues 1–19 (MAFKSIAVLSACIIVGSAL). Ig-like C2-type domains lie at 25–112 (PVLK…RVIS), 122–211 (PAKT…EEVV), 233–322 (PQYV…LKLT), and 327–413 (PKYE…VQVN). 4 cysteine pairs are disulfide-bonded: Cys-46-Cys-97, Cys-140-Cys-199, Cys-252-Cys-305, and Cys-349-Cys-395. Asn-283 carries an N-linked (GlcNAc...) asparagine glycan.

This sequence belongs to the hemolin family. As to expression, hemolymph.

It localises to the secreted. Its subcellular location is the extracellular space. Functionally, insect-immune protein. Forms a protein complex at the bacterial surface. Can inhibit hemocyte aggregation. The polypeptide is Hemolin (Hyalophora cecropia (Cecropia moth)).